We begin with the raw amino-acid sequence, 649 residues long: FAS-associated factor 1 (649 aa).

The region spanning 1-57 (MASNMDREMILADFQACTGIENIDEAITLLEQNNWDLVAAINGVIPQENGILQSDFG) is the UBA domain. The segment at 55–84 (DFGGETMPGPTFDPASPPAPAPAPSSSAFR) is disordered. S319 carries the post-translational modification Phosphoserine. A UBX domain is found at 568-645 (NAEPVSKLRI…NLFPQETLFL (78 aa)). The residue at position 579 (T579) is a Phosphothreonine. S581 carries the post-translational modification Phosphoserine.

As to quaternary structure, interacts with CDT1 and ATPase VCP/p97. Interacts (via UBA domain) with FAS (via death domain). Interacts (via UBA domain) with NLRP12 (via DAPIN/PYRIN domain). In terms of tissue distribution, central nervous system.

The protein localises to the nucleus. In terms of biological role, ubiquitin-binding protein. Required for the progression of DNA replication forks by targeting DNA replication licensing factor CDT1 for degradation. Potentiates but cannot initiate FAS-induced apoptosis. The chain is FAS-associated factor 1 (Faf1) from Rattus norvegicus (Rat).